The primary structure comprises 233 residues: Orotidine 5'-phosphate decarboxylase (233 aa).

Substrate is bound by residues Asp10, Lys32, 60-69, Thr115, Arg176, Gln185, Gly205, and Arg206; that span reads DLKLHDIPAT. Lys62 acts as the Proton donor in catalysis.

The protein belongs to the OMP decarboxylase family. Type 1 subfamily. Homodimer.

The catalysed reaction is orotidine 5'-phosphate + H(+) = UMP + CO2. It participates in pyrimidine metabolism; UMP biosynthesis via de novo pathway; UMP from orotate: step 2/2. Catalyzes the decarboxylation of orotidine 5'-monophosphate (OMP) to uridine 5'-monophosphate (UMP). This is Orotidine 5'-phosphate decarboxylase from Thermobifida fusca (strain YX).